A 538-amino-acid polypeptide reads, in one-letter code: MFQDRLIIFDTTLRDGEQSPGATLNADEKVEIARQLARLGVDVIEAGFAYASPGDFEAVERVARTVGTEDGPVICSLARAIRSDIQAAAEAIRPAARGRIHTFISTSDIHLEHQLRKSRAEVLAIAAEMVAFAKGFVDDVEFSPMDAGRSAPEYLYRVLEAAIAAGATTVNIPDTVGYLTPAEFGGLIRGITQNVRGIERAVISVHCHNDLGLAVANSLAAIENGARQIECTVNGIGERAGNCSLEEIVMALHVRRQFFNPIFGRPADSTVPLSTIDTRQIYKSSRLVSHLTGMLVQPNKAIVGANAFAHESGIHQDGVLKNRLTYEIMDAETVGVNENRIVLGKHSGRNAFRTRLVELGYELGDADLNRAFLRFKELADKKKTVSDWDIEAVISDEIRLIPEAYRLEQVQVSCGEPGLPTATVRLTGPDGVERVDAAVGTGPVDAVYKAINRLIELPNELIEFSVQSVTAGIDAMGEVTIRVRQDGRTFSGHAANTDIIVASARAYLNALNKLHFALAHPTHSGGALAHPDAAAQKL.

One can recognise a Pyruvate carboxyltransferase domain in the interval 6–277 (LIIFDTTLRD…DSTVPLSTID (272 aa)). Residues aspartate 15, histidine 206, histidine 208, and asparagine 242 each coordinate Mn(2+). The tract at residues 406 to 538 (RLEQVQVSCG…AHPDAAAQKL (133 aa)) is regulatory domain.

It belongs to the alpha-IPM synthase/homocitrate synthase family. LeuA type 1 subfamily. Homodimer. Mn(2+) is required as a cofactor.

It is found in the cytoplasm. It catalyses the reaction 3-methyl-2-oxobutanoate + acetyl-CoA + H2O = (2S)-2-isopropylmalate + CoA + H(+). It functions in the pathway amino-acid biosynthesis; L-leucine biosynthesis; L-leucine from 3-methyl-2-oxobutanoate: step 1/4. In terms of biological role, catalyzes the condensation of the acetyl group of acetyl-CoA with 3-methyl-2-oxobutanoate (2-ketoisovalerate) to form 3-carboxy-3-hydroxy-4-methylpentanoate (2-isopropylmalate). The protein is 2-isopropylmalate synthase of Gloeobacter violaceus (strain ATCC 29082 / PCC 7421).